The chain runs to 401 residues: Multidrug resistance protein MdtH (401 aa).

Over 1-12 (MSRVSQARNLGK) the chain is Cytoplasmic. Residues 13 to 33 (YFLLIDNMLVVLGFFVVFPLV) form a helical membrane-spanning segment. Topologically, residues 34–98 (SIRFVDQMGW…GFATMGIAHE (65 aa)) are periplasmic. Residues 99-116 (PWLLWFSCLLSGLGGTLF) traverse the membrane as a helical segment. Residues 117–137 (DPPRSALVVKLMPQQRGRFFS) are Cytoplasmic-facing. A helical membrane pass occupies residues 138-158 (LLMMQDSAGAVIGALLGSWLL). Residues 159–163 (QYDFR) are Periplasmic-facing. Residues 164-184 (LVCATGAVLFVLCAAFNAWLL) form a helical membrane-spanning segment. Topologically, residues 185-212 (PAWKLSTIRTPVREGMTRVMRDKRFVTY) are cytoplasmic. A helical transmembrane segment spans residues 213-233 (VLTLAGYYMLAVQVMLMLPIM). Over 234–242 (VNDVAGAPS) the chain is Periplasmic. Residues 243–263 (AVKWMYAIEACLSLTLLYPIA) traverse the membrane as a helical segment. Over 264-275 (RWSEKHFRLEHR) the chain is Cytoplasmic. Residues 276–296 (LMAGLLIMSLSMMPVGMVSGL) form a helical membrane-spanning segment. Residues 297–298 (QQ) are Periplasmic-facing. Residues 299–319 (LFTLICLFYIGSIIAEPARET) traverse the membrane as a helical segment. Residues 320-338 (LSASLADARARGSYMGFSR) are Cytoplasmic-facing. The helical transmembrane segment at 339–359 (LGLAIGGTIGYIGGGWLFDLG) threads the bilayer. Over 360 to 366 (KSAHQPE) the chain is Periplasmic. Residues 367-387 (LPWMMLGIIGIFTFLALGWQF) traverse the membrane as a helical segment. At 388–401 (SQKRAARRLLERDA) the chain is on the cytoplasmic side.

This sequence belongs to the major facilitator superfamily. DHA1 family. MdtH (TC 2.A.1.2.21) subfamily.

It is found in the cell inner membrane. The polypeptide is Multidrug resistance protein MdtH (Shigella dysenteriae serotype 1 (strain Sd197)).